The primary structure comprises 515 residues: Cytochrome P450 monooxygenase janP (515 aa).

Residues 20-36 (GFLWKYAAFMVFIYLLL) traverse the membrane as a helical segment. C456 contributes to the heme binding site. An N-linked (GlcNAc...) asparagine glycan is attached at N501.

Belongs to the cytochrome P450 family. Requires heme as cofactor.

Its subcellular location is the membrane. It functions in the pathway secondary metabolite biosynthesis. Cytochrome P450 monooxygenase; part of the gene cluster that mediates the biosynthesis of the indole diterpenes janthitremanes such as shearinine K or shearinine A. The geranylgeranyl diphosphate (GGPP) synthase janG catalyzes the first step in janthitremane biosynthesis via conversion of farnesyl pyrophosphate and isopentyl pyrophosphate into geranylgeranyl pyrophosphate (GGPP). Condensation of indole-3-glycerol phosphate with GGPP by the prenyl transferase janC then forms 3-geranylgeranylindole (3-GGI). Epoxidation by the FAD-dependent monooxygenase janM leads to a epoxidized-GGI that is substrate of the terpene cyclase janB for cyclization to yield paspaline. Paspaline is subsequently converted to 13-desoxypaspaline by the cytochrome P450 monooxygenase janP, via beta-PC-M6 in a series of alpha-face oxidations. The cytochrome P450 monooxygenase janQ is proposed to carry out sequential beta-face oxidation steps at C-7 and C-13 of 13-desoxypaspaline to form paspalicine and paspalinine respectively. The indole diterpene prenyltransferase janD may then convert paspalinine into shearinine K which is substrate of janO and/or additional enzymes for oxidation and cyclization to generate shearinine A. This Penicillium janthinellum (Penicillium vitale) protein is Cytochrome P450 monooxygenase janP.